The chain runs to 433 residues: Probable RNA 3'-terminal phosphate cyclase (433 aa).

Positions 1–10 are enriched in low complexity; sequence MGKNKNYNKN. The disordered stretch occupies residues 1 to 28; the sequence is MGKNKNYNKNQFKKSKTNNDTTVAQQQQ. Positions 18 to 28 are enriched in polar residues; that stretch reads NNDTTVAQQQQ. Residues Gln137 and 328–332 contribute to the ATP site; that span reads YLQDQ. His354 functions as the Tele-AMP-histidine intermediate in the catalytic mechanism. A disordered region spans residues 400 to 433; sequence LNNNNNNSNSNTTTTTTTTTISTTTIDNQNSEEK. A compositionally biased stretch (low complexity) spans 401–425; that stretch reads NNNNNNSNSNTTTTTTTTTISTTTI.

Belongs to the RNA 3'-terminal cyclase family. Type 1 subfamily.

Its subcellular location is the nucleus. It is found in the nucleoplasm. It carries out the reaction a 3'-end 3'-phospho-ribonucleotide-RNA + ATP = a 3'-end 2',3'-cyclophospho-ribonucleotide-RNA + AMP + diphosphate. Functionally, catalyzes the conversion of 3'-phosphate to a 2',3'-cyclic phosphodiester at the end of RNA. The mechanism of action of the enzyme occurs in 3 steps: (A) adenylation of the enzyme by ATP; (B) transfer of adenylate to an RNA-N3'P to produce RNA-N3'PP5'A; (C) and attack of the adjacent 2'-hydroxyl on the 3'-phosphorus in the diester linkage to produce the cyclic end product. The biological role of this enzyme is unknown but it is likely to function in some aspects of cellular RNA processing. The chain is Probable RNA 3'-terminal phosphate cyclase (rtca) from Dictyostelium discoideum (Social amoeba).